Reading from the N-terminus, the 90-residue chain is Toxin 3FTx-Psa1 (90 aa).

A signal peptide spans 1–21 (MKTLPLVLAVVAFVYLDLAHT). 4 disulfides stabilise this stretch: cysteine 24–cysteine 43, cysteine 36–cysteine 61, cysteine 65–cysteine 76, and cysteine 77–cysteine 82.

This sequence belongs to the three-finger toxin family. Ancestral subfamily. Expressed by the venom gland.

It localises to the secreted. This chain is Toxin 3FTx-Psa1, found in Psammophis mossambicus (Olive sand snake).